Consider the following 159-residue polypeptide: Putative ribosomal RNA large subunit methyltransferase H (159 aa).

S-adenosyl-L-methionine contacts are provided by residues Leu-76, Gly-108, and 127–132 (LSAMTF).

Belongs to the RNA methyltransferase RlmH family.

Its subcellular location is the cytoplasm. It catalyses the reaction pseudouridine(1915) in 23S rRNA + S-adenosyl-L-methionine = N(3)-methylpseudouridine(1915) in 23S rRNA + S-adenosyl-L-homocysteine + H(+). Specifically methylates the pseudouridine at position 1915 (m3Psi1915) in 23S rRNA. This is Putative ribosomal RNA large subunit methyltransferase H from Methanospirillum hungatei JF-1 (strain ATCC 27890 / DSM 864 / NBRC 100397 / JF-1).